Here is a 540-residue protein sequence, read N- to C-terminus: Coatomer subunit delta (540 aa).

The disordered stretch occupies residues 169–263; it reads RHEEMLRGKR…GMILGGKSGT (95 aa). A compositionally biased stretch (gly residues) spans 179 to 197; that stretch reads SGGYTGISGGGGMGSGGMG. The span at 212 to 229 shows a compositional bias: low complexity; the sequence is NNNNNNNNNNNNNNNNNN. A compositionally biased stretch (polar residues) spans 238–250; it reads SPNTSRPSAASSG. A compositionally biased stretch (gly residues) spans 251 to 261; that stretch reads SQGGMILGGKS. An MHD domain is found at 304–540; that stretch reads QEGVHITVEE…TLSVDTYEIK (237 aa).

It belongs to the adaptor complexes medium subunit family. Delta-COP subfamily. As to quaternary structure, oligomeric complex that consists of at least the alpha, beta, beta', gamma, delta, epsilon and zeta subunits.

The protein localises to the cytoplasm. It localises to the golgi apparatus membrane. Its subcellular location is the cytoplasmic vesicle. The protein resides in the COPI-coated vesicle membrane. Its function is as follows. The coatomer is a cytosolic protein complex that binds to dilysine motifs and reversibly associates with Golgi non-clathrin-coated vesicles, which further mediate biosynthetic protein transport from the ER, via the Golgi up to the trans Golgi network. Coatomer complex is required for budding from Golgi membranes, and is essential for the retrograde Golgi-to-ER transport of dilysine-tagged proteins. This Dictyostelium discoideum (Social amoeba) protein is Coatomer subunit delta (copd).